Here is a 470-residue protein sequence, read N- to C-terminus: Adenosylhomocysteinase (470 aa).

Residues Thr-61, Asp-136, and Glu-196 each coordinate substrate. An NAD(+)-binding site is contributed by 197–199; sequence TTT. Positions 226 and 230 each coordinate substrate. Residues Asn-231, 260-265, Glu-283, Asn-318, 339-341, and Asn-384 each bind NAD(+); these read GYGDVG and IGH.

This sequence belongs to the adenosylhomocysteinase family. NAD(+) serves as cofactor.

The protein localises to the cytoplasm. It carries out the reaction S-adenosyl-L-homocysteine + H2O = L-homocysteine + adenosine. It functions in the pathway amino-acid biosynthesis; L-homocysteine biosynthesis; L-homocysteine from S-adenosyl-L-homocysteine: step 1/1. May play a key role in the regulation of the intracellular concentration of adenosylhomocysteine. The protein is Adenosylhomocysteinase of Aromatoleum aromaticum (strain DSM 19018 / LMG 30748 / EbN1) (Azoarcus sp. (strain EbN1)).